Reading from the N-terminus, the 660-residue chain is DNA ligase (660 aa).

NAD(+) is bound by residues 33–37 (DFVYD), 82–83 (SL), and glutamate 110. Lysine 112 functions as the N6-AMP-lysine intermediate in the catalytic mechanism. NAD(+)-binding residues include arginine 133, glutamate 167, lysine 281, and lysine 305. Positions 396, 399, 412, and 417 each coordinate Zn(2+). Residues 583 to 660 (DENRLLAGKK…SFEDIKSYLN (78 aa)) enclose the BRCT domain.

It belongs to the NAD-dependent DNA ligase family. LigA subfamily. Mg(2+) serves as cofactor. It depends on Mn(2+) as a cofactor.

It catalyses the reaction NAD(+) + (deoxyribonucleotide)n-3'-hydroxyl + 5'-phospho-(deoxyribonucleotide)m = (deoxyribonucleotide)n+m + AMP + beta-nicotinamide D-nucleotide.. DNA ligase that catalyzes the formation of phosphodiester linkages between 5'-phosphoryl and 3'-hydroxyl groups in double-stranded DNA using NAD as a coenzyme and as the energy source for the reaction. It is essential for DNA replication and repair of damaged DNA. The protein is DNA ligase of Borrelia garinii subsp. bavariensis (strain ATCC BAA-2496 / DSM 23469 / PBi) (Borreliella bavariensis).